Consider the following 316-residue polypeptide: Methionyl-tRNA formyltransferase (316 aa).

(6S)-5,6,7,8-tetrahydrofolate is bound at residue Gly-111 to Pro-114.

It belongs to the Fmt family.

It carries out the reaction L-methionyl-tRNA(fMet) + (6R)-10-formyltetrahydrofolate = N-formyl-L-methionyl-tRNA(fMet) + (6S)-5,6,7,8-tetrahydrofolate + H(+). In terms of biological role, attaches a formyl group to the free amino group of methionyl-tRNA(fMet). The formyl group appears to play a dual role in the initiator identity of N-formylmethionyl-tRNA by promoting its recognition by IF2 and preventing the misappropriation of this tRNA by the elongation apparatus. This is Methionyl-tRNA formyltransferase from Chlamydia trachomatis serovar A (strain ATCC VR-571B / DSM 19440 / HAR-13).